We begin with the raw amino-acid sequence, 547 residues long: Glucose-6-phosphate isomerase (547 aa).

Glu353 (proton donor) is an active-site residue. Active-site residues include His384 and Lys512.

This sequence belongs to the GPI family.

It is found in the cytoplasm. It catalyses the reaction alpha-D-glucose 6-phosphate = beta-D-fructose 6-phosphate. It functions in the pathway carbohydrate biosynthesis; gluconeogenesis. The protein operates within carbohydrate degradation; glycolysis; D-glyceraldehyde 3-phosphate and glycerone phosphate from D-glucose: step 2/4. Catalyzes the reversible isomerization of glucose-6-phosphate to fructose-6-phosphate. This chain is Glucose-6-phosphate isomerase, found in Campylobacter jejuni subsp. doylei (strain ATCC BAA-1458 / RM4099 / 269.97).